The following is a 511-amino-acid chain: Ribose import ATP-binding protein RbsA (511 aa).

ABC transporter domains are found at residues 9–245 (FEAK…VGRD) and 261–506 (LRAE…LPRR). Residue 41-48 (GENGAGKS) participates in ATP binding.

This sequence belongs to the ABC transporter superfamily. Ribose importer (TC 3.A.1.2.1) family. As to quaternary structure, the complex is composed of an ATP-binding protein (RbsA), two transmembrane proteins (RbsC) and a solute-binding protein (RbsB).

Its subcellular location is the cell inner membrane. The enzyme catalyses D-ribose(out) + ATP + H2O = D-ribose(in) + ADP + phosphate + H(+). Its function is as follows. Part of the ABC transporter complex RbsABC involved in ribose import. Responsible for energy coupling to the transport system. The sequence is that of Ribose import ATP-binding protein RbsA from Rhodopirellula baltica (strain DSM 10527 / NCIMB 13988 / SH1).